We begin with the raw amino-acid sequence, 264 residues long: Undecaprenyl-diphosphatase (264 aa).

The next 8 helical transmembrane spans lie at 1–21, 40–60, 81–101, 109–129, 140–160, 183–203, 211–231, and 239–259; these read MTVF…FLPI, GLTF…AFFW, MFWY…LLEE, TPLL…WADA, ISMA…IPGV, FSFL…LKDI, AFIT…SFLL, and FALF…LAAA.

It belongs to the UppP family.

It is found in the cell membrane. The enzyme catalyses di-trans,octa-cis-undecaprenyl diphosphate + H2O = di-trans,octa-cis-undecaprenyl phosphate + phosphate + H(+). In terms of biological role, catalyzes the dephosphorylation of undecaprenyl diphosphate (UPP). Confers resistance to bacitracin. The polypeptide is Undecaprenyl-diphosphatase (Pelotomaculum thermopropionicum (strain DSM 13744 / JCM 10971 / SI)).